We begin with the raw amino-acid sequence, 395 residues long: 1-deoxy-D-xylulose 5-phosphate reductoisomerase (395 aa).

NADPH-binding residues include Thr15, Gly16, Ser17, Ile18, Gly41, Asn43, and Asn126. Lys127 is a binding site for 1-deoxy-D-xylulose 5-phosphate. Residue Glu128 participates in NADPH binding. Asp152 is a Mn(2+) binding site. 1-deoxy-D-xylulose 5-phosphate contacts are provided by Ser153, Glu154, Ser178, and His201. Glu154 contacts Mn(2+). Gly207 contacts NADPH. 1-deoxy-D-xylulose 5-phosphate is bound by residues Ser214, Asn219, Lys220, and Glu223. Glu223 contacts Mn(2+).

Belongs to the DXR family. Mg(2+) is required as a cofactor. The cofactor is Mn(2+).

The enzyme catalyses 2-C-methyl-D-erythritol 4-phosphate + NADP(+) = 1-deoxy-D-xylulose 5-phosphate + NADPH + H(+). It functions in the pathway isoprenoid biosynthesis; isopentenyl diphosphate biosynthesis via DXP pathway; isopentenyl diphosphate from 1-deoxy-D-xylulose 5-phosphate: step 1/6. Functionally, catalyzes the NADPH-dependent rearrangement and reduction of 1-deoxy-D-xylulose-5-phosphate (DXP) to 2-C-methyl-D-erythritol 4-phosphate (MEP). The sequence is that of 1-deoxy-D-xylulose 5-phosphate reductoisomerase from Ruegeria sp. (strain TM1040) (Silicibacter sp.).